Consider the following 818-residue polypeptide: Patatin-like phospholipase domain-containing protein YALI0D16379g (818 aa).

2 disordered regions span residues 1–50 (MLKL…RDVN) and 154–178 (EEKR…KTKE). Positions 22–38 (SQQLTLDSPEGSETSSR) are enriched in polar residues. Basic and acidic residues predominate over residues 164–178 (KDKEGSEGDKTKTKE). Residues 223–243 (WPALFFIGMWLLFLTTIYASV) traverse the membrane as a helical segment. The region spanning 398 to 589 (LCLSGGGCFA…RTDIPVDALN (192 aa)) is the PNPLA domain. The GXSXG motif lies at 429–433 (GTSGG). S431 (nucleophile) is an active-site residue. The Proton acceptor role is filled by D576. The interval 781–805 (AGTDISSSNSDYDHEPQWEMDEGDS) is disordered.

It belongs to the PLPL family.

The protein resides in the membrane. In terms of biological role, probable lipid hydrolase. This Yarrowia lipolytica (strain CLIB 122 / E 150) (Yeast) protein is Patatin-like phospholipase domain-containing protein YALI0D16379g.